Reading from the N-terminus, the 402-residue chain is Sorting nexin 1 (402 aa).

Residues 1–10 show a composition bias toward polar residues; sequence MESTEQPRNI. The interval 1–25 is disordered; sequence MESTEQPRNISGSMQSPRSPSSHPY. A compositionally biased stretch (low complexity) spans 11 to 24; it reads SGSMQSPRSPSSHP. Ser-16 is subject to Phosphoserine. The 120-residue stretch at 24–143 folds into the PX domain; that stretch reads PYLSVSVTDP…TFLQADEETM (120 aa). A 1,2-diacyl-sn-glycero-3-phospho-(1D-myo-inositol-3-phosphate) contacts are provided by Arg-67, Lys-93, and Arg-109. The BAR domain occupies 160–402; sequence LMQMFRDVQS…LPKLEASYSV (243 aa).

Belongs to the sorting nexin family. As to quaternary structure, homodimer. Heterodimer with SNX2A or SNX2B. Component of the retromer complex which consists of VPS29 (MAG1), VPS26 (VPS26A or VPS26B), VPS35 (VPS35A or VPS35B or VPS35C), VPS5/17 (SNX1 or SNX2A or SNX2B). Interacts with BLOS1 and BLOS2. Ubiquitously expressed.

Its subcellular location is the cytoplasm. It localises to the endosome membrane. It is found in the prevacuolar compartment membrane. The protein resides in the golgi apparatus. The protein localises to the trans-Golgi network membrane. In terms of biological role, plays a role in vesicular protein sorting. Acts at the crossroads between the secretory and endocytic pathways. Is involved in the endosome to vacuole protein transport via its interaction with the BLOS1/2 proteins and, as component of the membrane-associated retromer complex, is also involved in endosome-to-Golgi retrograde transport. Required for the auxin-carrier protein PIN2 sorting to the lytic vacuolar pathway and the trafficking of several plasma membrane proteins. Also involved in the efficient sorting of seed storage protein globulin 12S. In Arabidopsis thaliana (Mouse-ear cress), this protein is Sorting nexin 1 (SNX1).